Here is a 696-residue protein sequence, read N- to C-terminus: Polyribonucleotide nucleotidyltransferase (696 aa).

The Mg(2+) site is built by D489 and D495. A KH domain is found at 556–615 (PQYVTMKINPEKIRDVIGKGGVVIREITEATNCAIDISDDGTIKIAAHTTEEGEAAKRRI). The 69-residue stretch at 625 to 693 (GKVYEGTVVK…RQGRVRLSMK (69 aa)) folds into the S1 motif domain.

Belongs to the polyribonucleotide nucleotidyltransferase family. Component of the RNA degradosome, which is a multiprotein complex involved in RNA processing and mRNA degradation. Mg(2+) serves as cofactor.

It is found in the cytoplasm. The enzyme catalyses RNA(n+1) + phosphate = RNA(n) + a ribonucleoside 5'-diphosphate. Its function is as follows. Involved in mRNA degradation. Catalyzes the phosphorolysis of single-stranded polyribonucleotides processively in the 3'- to 5'-direction. The polypeptide is Polyribonucleotide nucleotidyltransferase (Coxiella burnetii (strain CbuG_Q212) (Coxiella burnetii (strain Q212))).